The chain runs to 515 residues: Serine/threonine-protein phosphatase PP-Z (515 aa).

Residues 1-186 (MGQGSSKHAD…SSTDPDDPET (186 aa)) are disordered. Residues 17-30 (PSFSRSDTQGSIKS) are compositionally biased toward polar residues. Ser18 bears the Phosphoserine mark. Positions 40–51 (KGKDSNHDRRTS) are enriched in basic and acidic residues. Residues 63–74 (ETPPSLPPPPSP) show a composition bias toward pro residues. The segment covering 91–109 (DSGNSSQSPTSPHPSNQPA) has biased composition (polar residues). Over residues 126 to 143 (SSSSYAVSPTSPTSPTSS) the composition is skewed to low complexity. Residues Asp248, His250, Asp276, and Asn308 each contribute to the Mn(2+) site. His309 acts as the Proton donor in catalysis. Residues His357 and His432 each contribute to the Mn(2+) site. Ser505 and Ser514 each carry phosphoserine.

It belongs to the PPP phosphatase family. PP-Z subfamily. Mn(2+) serves as cofactor.

The protein resides in the cytoplasm. It catalyses the reaction O-phospho-L-seryl-[protein] + H2O = L-seryl-[protein] + phosphate. It carries out the reaction O-phospho-L-threonyl-[protein] + H2O = L-threonyl-[protein] + phosphate. This is Serine/threonine-protein phosphatase PP-Z (pzh1) from Schizosaccharomyces pombe (strain 972 / ATCC 24843) (Fission yeast).